Here is a 324-residue protein sequence, read N- to C-terminus: dITP/XTP pyrophosphatase (324 aa).

Residues Met1–Val126 are unknown. Positions Leu127–Gln324 are NTP pyrophosphatase. Thr131–Lys136 lines the substrate pocket. The Proton acceptor role is filled by Asp193. Position 193 (Asp193) interacts with Mg(2+). Substrate-binding positions include Ser194, Phe277–Asp280, Lys300, and His305–Arg306.

The protein belongs to the HAM1 NTPase family. In terms of assembly, homodimer. Mg(2+) serves as cofactor.

The catalysed reaction is XTP + H2O = XMP + diphosphate + H(+). It carries out the reaction dITP + H2O = dIMP + diphosphate + H(+). It catalyses the reaction ITP + H2O = IMP + diphosphate + H(+). Pyrophosphatase that catalyzes the hydrolysis of nucleoside triphosphates to their monophosphate derivatives, with a high preference for the non-canonical purine nucleotides XTP (xanthosine triphosphate), dITP (deoxyinosine triphosphate) and ITP. Seems to function as a house-cleaning enzyme that removes non-canonical purine nucleotides from the nucleotide pool, thus preventing their incorporation into DNA/RNA and avoiding chromosomal lesions. The polypeptide is dITP/XTP pyrophosphatase (Streptococcus thermophilus (strain CNRZ 1066)).